Here is an 89-residue protein sequence, read N- to C-terminus: Small ribosomal subunit protein bS20 (89 aa).

The segment at 1-28 (MTLANIKSAKKRAVQSEKSRQHNASQRS) is disordered.

Belongs to the bacterial ribosomal protein bS20 family.

Binds directly to 16S ribosomal RNA. The polypeptide is Small ribosomal subunit protein bS20 (Mannheimia succiniciproducens (strain KCTC 0769BP / MBEL55E)).